The primary structure comprises 57 residues: Large ribosomal subunit protein bL33 (57 aa).

This sequence belongs to the bacterial ribosomal protein bL33 family.

The sequence is that of Large ribosomal subunit protein bL33 from Akkermansia muciniphila (strain ATCC BAA-835 / DSM 22959 / JCM 33894 / BCRC 81048 / CCUG 64013 / CIP 107961 / Muc).